A 206-amino-acid polypeptide reads, in one-letter code: dITP/XTP pyrophosphatase (206 aa).

7 to 12 is a binding site for substrate; the sequence is SSHGYK. Catalysis depends on Asp70, which acts as the Proton acceptor. Asp70 is a binding site for Mg(2+). Residues Thr71, 154–157, Lys177, and 182–183 each bind substrate; these read FGYD and HR.

It belongs to the HAM1 NTPase family. In terms of assembly, homodimer. It depends on Mg(2+) as a cofactor.

The catalysed reaction is XTP + H2O = XMP + diphosphate + H(+). It catalyses the reaction dITP + H2O = dIMP + diphosphate + H(+). It carries out the reaction ITP + H2O = IMP + diphosphate + H(+). Pyrophosphatase that catalyzes the hydrolysis of nucleoside triphosphates to their monophosphate derivatives, with a high preference for the non-canonical purine nucleotides XTP (xanthosine triphosphate), dITP (deoxyinosine triphosphate) and ITP. Seems to function as a house-cleaning enzyme that removes non-canonical purine nucleotides from the nucleotide pool, thus preventing their incorporation into DNA/RNA and avoiding chromosomal lesions. The polypeptide is dITP/XTP pyrophosphatase (Chlamydia abortus (strain DSM 27085 / S26/3) (Chlamydophila abortus)).